Consider the following 135-residue polypeptide: Small ribosomal subunit protein uS11 (135 aa).

It belongs to the universal ribosomal protein uS11 family. Part of the 30S ribosomal subunit. Interacts with proteins S7 and S18. Binds to IF-3.

Its function is as follows. Located on the platform of the 30S subunit, it bridges several disparate RNA helices of the 16S rRNA. Forms part of the Shine-Dalgarno cleft in the 70S ribosome. The sequence is that of Small ribosomal subunit protein uS11 from Protochlamydia amoebophila (strain UWE25).